Here is a 323-residue protein sequence, read N- to C-terminus: Acetyl-coenzyme A carboxylase carboxyl transferase subunit alpha (323 aa).

Residues 39-293 form the CoA carboxyltransferase C-terminal domain; that stretch reads RLSKKSQQLT…RRALADSLRQ (255 aa).

Belongs to the AccA family. As to quaternary structure, acetyl-CoA carboxylase is a heterohexamer composed of biotin carboxyl carrier protein (AccB), biotin carboxylase (AccC) and two subunits each of ACCase subunit alpha (AccA) and ACCase subunit beta (AccD).

The protein resides in the cytoplasm. The catalysed reaction is N(6)-carboxybiotinyl-L-lysyl-[protein] + acetyl-CoA = N(6)-biotinyl-L-lysyl-[protein] + malonyl-CoA. It functions in the pathway lipid metabolism; malonyl-CoA biosynthesis; malonyl-CoA from acetyl-CoA: step 1/1. Component of the acetyl coenzyme A carboxylase (ACC) complex. First, biotin carboxylase catalyzes the carboxylation of biotin on its carrier protein (BCCP) and then the CO(2) group is transferred by the carboxyltransferase to acetyl-CoA to form malonyl-CoA. This is Acetyl-coenzyme A carboxylase carboxyl transferase subunit alpha from Burkholderia orbicola (strain AU 1054).